The following is a 106-amino-acid chain: SH3 domain-binding glutamic acid-rich-like protein 2-B (106 aa).

An SH3-binding motif is present at residues Gln-61–Pro-67.

The protein belongs to the SH3BGR family.

The protein resides in the nucleus. This Xenopus laevis (African clawed frog) protein is SH3 domain-binding glutamic acid-rich-like protein 2-B (sh3bgrl2-b).